A 177-amino-acid chain; its full sequence is Nucleoside triphosphate/diphosphate phosphatase (177 aa).

The Proton donor role is filled by Arg23. 6 residues coordinate Mg(2+): Asn87, Asp103, Asp105, Asp107, Asp120, and Glu123.

This sequence belongs to the Ntdp family. It depends on Mg(2+) as a cofactor.

The catalysed reaction is a ribonucleoside 5'-triphosphate + H2O = a ribonucleoside 5'-diphosphate + phosphate + H(+). It carries out the reaction a ribonucleoside 5'-diphosphate + H2O = a ribonucleoside 5'-phosphate + phosphate + H(+). Its function is as follows. Has nucleoside phosphatase activity towards nucleoside triphosphates and nucleoside diphosphates. This is Nucleoside triphosphate/diphosphate phosphatase from Streptococcus pneumoniae (strain ATCC 700669 / Spain 23F-1).